Consider the following 130-residue polypeptide: Iron-sulfur cluster insertion protein ErpA (130 aa).

Iron-sulfur cluster contacts are provided by Cys-58, Cys-122, and Cys-124.

The protein belongs to the HesB/IscA family. Homodimer. The cofactor is iron-sulfur cluster.

In terms of biological role, required for insertion of 4Fe-4S clusters for at least IspG. The polypeptide is Iron-sulfur cluster insertion protein ErpA (Stenotrophomonas maltophilia (strain R551-3)).